The sequence spans 299 residues: Cold shock protein 1 (299 aa).

Ala2 is subject to N-acetylalanine. Residues 12-76 (TGKVNWFNAS…GKTKAVNVTA (65 aa)) enclose the CSD domain. A disordered region spans residues 76 to 97 (APGGGSLKKENNSRGNGARRGG). 7 CCHC-type zinc fingers span residues 100-117 (SGCYNCGELGHISKDCGI), 132-149 (EGCYNCGDTGHFARDCTS), 164-181 (DGCYTCGDVGHVARDCTQ), 198-215 (DGCYTCGDVGHFARDCTQ), 230-247 (GTCYSCGGVGHIARDCAT), 253-270 (RGCYQCGGSGHLARDCDQ), and 280-297 (NACYKCGKEGHFARECSS).

This sequence belongs to the cold shock protein (CSP) family. As to expression, mostly expressed in shoot apices and siliques, and, to a lower extent, in roots, cotyledons, stems, shoots, leaves, floral buds and flowers.

It is found in the nucleus. The protein resides in the cytoplasm. Chaperone that binds to RNA, single- (ssDNA) and double-stranded (dsDNA) DNA, and unwinds nucleic acid duplex. Exhibits a DNA melting activity. May be involved in cold resistance. Prevents seed germination under dehydration or salt stress conditions. In Arabidopsis thaliana (Mouse-ear cress), this protein is Cold shock protein 1 (CSP1).